The following is a 475-amino-acid chain: Ribulose bisphosphate carboxylase large chain (475 aa).

A propeptide spanning residues 1-2 (MS) is cleaved from the precursor. At P3 the chain carries N-acetylproline. K14 carries the post-translational modification N6,N6,N6-trimethyllysine. 2 residues coordinate substrate: N123 and T173. K175 serves as the catalytic Proton acceptor. Substrate is bound at residue K177. Residues K201, D203, and E204 each contribute to the Mg(2+) site. Residue K201 is modified to N6-carboxylysine. Catalysis depends on H294, which acts as the Proton acceptor. Residues R295, H327, and S379 each contribute to the substrate site.

The protein belongs to the RuBisCO large chain family. Type I subfamily. Heterohexadecamer of 8 large chains and 8 small chains. It depends on Mg(2+) as a cofactor.

The protein resides in the plastid. Its subcellular location is the chloroplast. The enzyme catalyses 2 (2R)-3-phosphoglycerate + 2 H(+) = D-ribulose 1,5-bisphosphate + CO2 + H2O. The catalysed reaction is D-ribulose 1,5-bisphosphate + O2 = 2-phosphoglycolate + (2R)-3-phosphoglycerate + 2 H(+). In terms of biological role, ruBisCO catalyzes two reactions: the carboxylation of D-ribulose 1,5-bisphosphate, the primary event in carbon dioxide fixation, as well as the oxidative fragmentation of the pentose substrate in the photorespiration process. Both reactions occur simultaneously and in competition at the same active site. The chain is Ribulose bisphosphate carboxylase large chain from Huperzia lucidula (Shining clubmoss).